The primary structure comprises 506 residues: Maturase K (506 aa).

The protein belongs to the intron maturase 2 family. MatK subfamily.

The protein resides in the plastid. Its subcellular location is the chloroplast. Functionally, usually encoded in the trnK tRNA gene intron. Probably assists in splicing its own and other chloroplast group II introns. The chain is Maturase K from Pisum sativum (Garden pea).